Consider the following 509-residue polypeptide: Histidine ammonia-lyase (509 aa).

A cross-link (5-imidazolinone (Ala-Gly)) is located at residues 144 to 146; it reads ASG. S145 carries the post-translational modification 2,3-didehydroalanine (Ser).

The protein belongs to the PAL/histidase family. Contains an active site 4-methylidene-imidazol-5-one (MIO), which is formed autocatalytically by cyclization and dehydration of residues Ala-Ser-Gly.

Its subcellular location is the cytoplasm. It catalyses the reaction L-histidine = trans-urocanate + NH4(+). It functions in the pathway amino-acid degradation; L-histidine degradation into L-glutamate; N-formimidoyl-L-glutamate from L-histidine: step 1/3. This Rhodospirillum centenum (strain ATCC 51521 / SW) protein is Histidine ammonia-lyase.